The sequence spans 123 residues: Large ribosomal subunit protein bL12 (123 aa).

This sequence belongs to the bacterial ribosomal protein bL12 family. Homodimer. Part of the ribosomal stalk of the 50S ribosomal subunit. Forms a multimeric L10(L12)X complex, where L10 forms an elongated spine to which 2 to 4 L12 dimers bind in a sequential fashion. Binds GTP-bound translation factors.

Its function is as follows. Forms part of the ribosomal stalk which helps the ribosome interact with GTP-bound translation factors. Is thus essential for accurate translation. This Roseobacter denitrificans (strain ATCC 33942 / OCh 114) (Erythrobacter sp. (strain OCh 114)) protein is Large ribosomal subunit protein bL12.